The sequence spans 663 residues: Chaperone protein HtpG (663 aa).

Residues 1 to 352 (MTKQTLSFQA…SADLPLNVSR (352 aa)) are a; substrate-binding. The span at 218 to 228 (ELINPSDEKGG) shows a compositional bias: basic and acidic residues. A disordered region spans residues 218–237 (ELINPSDEKGGRQPGGMVKT). The segment at 353–595 (ELLQESRDVK…DHGMSTQLAR (243 aa)) is b. Residues 596 to 663 (MLKQAGQAAP…YVKRVNALLV (68 aa)) are c.

Belongs to the heat shock protein 90 family. In terms of assembly, homodimer.

The protein resides in the cytoplasm. Functionally, molecular chaperone. Has ATPase activity. The polypeptide is Chaperone protein HtpG (Albidiferax ferrireducens (strain ATCC BAA-621 / DSM 15236 / T118) (Rhodoferax ferrireducens)).